The sequence spans 101 residues: Ribonuclease kappa-A (101 aa).

Helical transmembrane passes span Ala-13–Phe-33 and Val-68–Cys-88.

It belongs to the RNase K family.

The protein resides in the membrane. Its function is as follows. Endoribonuclease which preferentially cleaves ApU and ApG phosphodiester bonds. In Xenopus laevis (African clawed frog), this protein is Ribonuclease kappa-A (rnasek-a).